The chain runs to 164 residues: UPF0304 protein NT01EI_2691 (164 aa).

Belongs to the UPF0304 family.

The chain is UPF0304 protein NT01EI_2691 from Edwardsiella ictaluri (strain 93-146).